A 631-amino-acid polypeptide reads, in one-letter code: RING finger protein 112 (631 aa).

An RING-type zinc finger spans residues 57–98; the sequence is CSICLERLREPISLDCGHDFCIRCFSTHRIPGCELPCCPECR. The interval 131–631 is interaction with ZBTB16; the sequence is AVRAERLLLV…GDREPLLQEE (501 aa). The GB1/RHD3-type G domain maps to 166–397; that stretch reads DTPVCLLAVL…YISDVLSTAP (232 aa). 317 to 318 provides a ligand contact to GTP; the sequence is RD. The next 2 membrane-spanning stretches (helical) occupy residues 547–567 and 580–600; these read LAAV…GVVG and GMVA…GGGV.

Belongs to the TRAFAC class dynamin-like GTPase superfamily. GB1/RHD3 GTPase family. GB1 subfamily. Self-associates. Interacts with SP1 in an oxidative stress-regulated manner. Interacts with SIGMAR1 in an oxidative stress-regulated manner. Interacts with ZBTB16 (via C2H2-type zinc finger domains 1 and 2). In terms of processing, auto-ubiquitinated. In terms of tissue distribution, predominantly expressed in brain.

It is found in the membrane. It localises to the cytoplasm. The protein resides in the nucleus. The protein localises to the nuclear body. Its subcellular location is the nucleoplasm. It is found in the endosome. It localises to the cytoplasmic vesicle. The protein resides in the secretory vesicle. The protein localises to the synaptic vesicle. Its subcellular location is the postsynaptic density. It is found in the perikaryon. It localises to the cell projection. The protein resides in the neuron projection. The catalysed reaction is S-ubiquitinyl-[E2 ubiquitin-conjugating enzyme]-L-cysteine + [acceptor protein]-L-lysine = [E2 ubiquitin-conjugating enzyme]-L-cysteine + N(6)-ubiquitinyl-[acceptor protein]-L-lysine.. It functions in the pathway protein modification; protein ubiquitination. Functionally, E3 ubiquitin-protein ligase that plays an important role in neuronal differentiation, including neurogenesis and gliogenesis, during brain development. During embryonic development initiates neuronal differentiation by inducing cell cycle arrest at the G0/G1 phase through up-regulation of cell-cycle regulatory proteins. Plays a role not only in the fetal period during the development of the nervous system, but also in the adult brain, where it is involved in the maintenance of neural functions and protection of the nervous tissue cells from oxidative stress-induced damage. Exhibits GTPase and E3 ubiquitin-protein ligase activities. Regulates dendritic spine density and synaptic neurotransmission; its ability to hydrolyze GTP is involved in the maintenance of dendritic spine density. This Rattus norvegicus (Rat) protein is RING finger protein 112 (Rnf112).